Reading from the N-terminus, the 479-residue chain is Neuronal acetylcholine receptor subunit alpha-9 (479 aa).

The first 22 residues, 1-22, serve as a signal peptide directing secretion; it reads MNWSHSCISFCWIYFAASRLRA. The Extracellular segment spans residues 23–238; that stretch reads AETADGKYAQ…FTLLLKRRSS (216 aa). Asn-57 is a glycosylation site (N-linked (GlcNAc...) asparagine). Cysteines 155 and 169 form a disulfide. Asn-170 carries an N-linked (GlcNAc...) asparagine glycan. Na(+) contacts are provided by Ser-191 and Asp-193. Cys-219 and Cys-220 are disulfide-bonded. 3 consecutive transmembrane segments (helical) span residues 239–259, 269–289, and 303–323; these read FYIV…PLSF, VSLG…VAEI, and YIAT…VMNI. Residues 324–457 are Cytoplasmic-facing; sequence HFCGAEARPV…WKKVAKVIDR (134 aa). A helical membrane pass occupies residues 458-478; it reads FFMWIFFIMVFVMTILIIARA.

It belongs to the ligand-gated ion channel (TC 1.A.9) family. Acetylcholine receptor (TC 1.A.9.1) subfamily. Alpha-9/CHRNA9 sub-subfamily. In terms of assembly, forms homo- or heteropentameric channels in conjunction with CHRNA10. The native outer hair cell receptor is composed of CHRNA9:CHRNA10 heterooligomers. Found in the stoichiometric form (CHRNA9)2:(CHRNA10)3. In terms of processing, N-glycosylated. In terms of tissue distribution, expressed in cochlea, keratinocytes, pituitary gland, B-cells and T-cells.

It localises to the synaptic cell membrane. The protein resides in the cell membrane. The enzyme catalyses Ca(2+)(in) = Ca(2+)(out). It carries out the reaction K(+)(in) = K(+)(out). The catalysed reaction is Na(+)(in) = Na(+)(out). It catalyses the reaction Mg(2+)(in) = Mg(2+)(out). With respect to regulation, activated by a myriad of ligands such as acetylcholine. AChR activity is inhibited by the antagonist alpha-conotoxins RgIA and GeXXA, small disulfide-constrained peptides from cone snails. In terms of biological role, component of neuronal acetylcholine receptors (nAChRs) that function as pentameric, ligand-gated cation channels with high calcium permeability among other activities. nAChRs are excitatory neurotrasnmitter receptors formed by a collection of nAChR subunits known to mediate synaptic transmission in the nervous system and the neuromuscular junction. Each nAchR subunit confers differential attributes to channel properties, including activation, deactivation and desensitization kinetics, pH sensitivity, cation permeability, and binding to allosteric modulators. Forms either homopentamers or heteropentamers with CHRNA10. Expressed in the inner ear, in sympathetic neurons and in other non-neuronal cells, such as skin keratinocytes and lymphocytes. nAChR formed by CHRNA9:CHRNA10 mediate central nervous system control of auditory and vestibular sensory processing. The channel is permeable to a range of divalent cations including calcium, the influx of which may activate a potassium current which hyperpolarizes the cell membrane. In the ear, mediates synaptic transmission between efferent olivocochlear fibers and hair cells of the cochlea, this may lead to a reduction in basilar membrane motion, altering the activity of auditory nerve fibers and reducing the range of dynamic hearing. This may protect against acoustic trauma. May also regulate keratinocyte adhesion. The sequence is that of Neuronal acetylcholine receptor subunit alpha-9 from Homo sapiens (Human).